The following is a 666-amino-acid chain: DNA ligase (666 aa).

NAD(+)-binding positions include 31–35 (DYDFD), 80–81 (SL), and glutamate 111. Lysine 113 serves as the catalytic N6-AMP-lysine intermediate. NAD(+) contacts are provided by arginine 134, glutamate 170, lysine 285, and lysine 309. The Zn(2+) site is built by cysteine 403, cysteine 406, cysteine 421, and cysteine 427. The BRCT domain occupies 587–666 (VVSNKLLGKI…ESDFSALLTS (80 aa)).

It belongs to the NAD-dependent DNA ligase family. LigA subfamily. Mg(2+) is required as a cofactor. Requires Mn(2+) as cofactor.

It carries out the reaction NAD(+) + (deoxyribonucleotide)n-3'-hydroxyl + 5'-phospho-(deoxyribonucleotide)m = (deoxyribonucleotide)n+m + AMP + beta-nicotinamide D-nucleotide.. In terms of biological role, DNA ligase that catalyzes the formation of phosphodiester linkages between 5'-phosphoryl and 3'-hydroxyl groups in double-stranded DNA using NAD as a coenzyme and as the energy source for the reaction. It is essential for DNA replication and repair of damaged DNA. This is DNA ligase from Flavobacterium psychrophilum (strain ATCC 49511 / DSM 21280 / CIP 103535 / JIP02/86).